The chain runs to 155 residues: Fibroblast growth factor 1 (155 aa).

An N-acetylalanine modification is found at alanine 2. A propeptide spanning residues 2-15 is cleaved from the precursor; it reads AEGEITTFAALTER. Asparagine 33 provides a ligand contact to heparin. Residues 127 to 143 form a heparin-binding region; it reads KKNGSCKRGPRTHYGQK.

This sequence belongs to the heparin-binding growth factors family. Monomer. Homodimer. Interacts with FGFR1, FGFR2, FGFR3 and FGFR4. Affinity between fibroblast growth factors (FGFs) and their receptors is increased by heparan sulfate glycosaminoglycans that function as coreceptors. Found in a complex with FGFBP1, FGF1 and FGF2. Interacts with FGFBP1. Part of a Cu(2+)-dependent multiprotein aggregate containing FGF1, S100A13 and SYT1. Interacts with SYT1. Interacts with S100A13. Interacts with LRRC59. Interacts with CSNKA, CSNKB and FIBP. While binding with LRRC59, CSNKA and FIBP seem mutually exclusive, CSNKB and FIBP may cooperatively interact with FGF1. Forms a ternary complex with FGFR1 and ITGAV:ITGB3 and induces the recruitment of PTPN11 to the complex. Post-translationally, in the nucleus, phosphorylated by PKC/PRKCD.

The protein localises to the secreted. Its subcellular location is the cytoplasm. It is found in the cell cortex. The protein resides in the cytosol. It localises to the nucleus. Plays an important role in the regulation of cell survival, cell division, angiogenesis, cell differentiation and cell migration. Functions as a potent mitogen in vitro. Acts as a ligand for FGFR1 and integrins. Binds to FGFR1 in the presence of heparin leading to FGFR1 dimerization and activation via sequential autophosphorylation on tyrosine residues which act as docking sites for interacting proteins, leading to the activation of several signaling cascades. Binds to integrin ITGAV:ITGB3. Its binding to integrin, subsequent ternary complex formation with integrin and FGFR1, and the recruitment of PTPN11 to the complex are essential for FGF1 signaling. Induces the phosphorylation and activation of FGFR1, FRS2, MAPK3/ERK1, MAPK1/ERK2 and AKT1. Can induce angiogenesis. This is Fibroblast growth factor 1 (Fgf1) from Mus musculus (Mouse).